The following is a 576-amino-acid chain: Interleukin-1 receptor type 1 (576 aa).

Positions 1 to 19 (MENMKVLLGFICLIVPLLS) are cleaved as a signal peptide. Ig-like C2-type domains are found at residues 20-115 (LETD…ITMS), 121-217 (PGLC…RVIT), and 229-331 (PVIM…VRLV). Residues 20 to 338 (LETDKCTEYP…RLVYPVPDFK (319 aa)) lie on the Extracellular side of the membrane. 3 disulfides stabilise this stretch: Cys-25/Cys-107, Cys-46/Cys-99, and Cys-145/Cys-199. Residues Asn-63 and Asn-103 are each glycosylated (N-linked (GlcNAc...) asparagine). 3 N-linked (GlcNAc...) asparagine glycosylation sites follow: Asn-236, Asn-252, and Asn-266. Cys-251 and Cys-315 are disulfide-bonded. A helical transmembrane segment spans residues 339 to 359 (NYLIGGFAIFTATAVFCACIY). Residues 360-576 (KVFKVDIVLW…LQAETHLPLG (217 aa)) are Cytoplasmic-facing. The TIR domain maps to 386 to 541 (RTYDAYVLYP…RFWKNLRYQM (156 aa)). Glu-473 is an active-site residue. Tyr-499 carries the phosphotyrosine modification. Thr-556 carries the post-translational modification Phosphothreonine; by PKC.

The protein belongs to the interleukin-1 receptor family. The interleukin-1 receptor complex is a heterodimer of IL1R1 and IL1RAP. Interacts with PIK3R1. Interacts with IL1A. Post-translationally, a soluble form (sIL1R1) is probably produced by proteolytic cleavage at the cell surface (shedding). Rapidly phosphorylated on Tyr-499 in response to IL-1, which creates a SH2 binding site for the PI 3-kinase regulatory subunit PIK3R1.

The protein resides in the membrane. It localises to the cell membrane. The protein localises to the secreted. It catalyses the reaction NAD(+) + H2O = ADP-D-ribose + nicotinamide + H(+). Its function is as follows. Receptor for IL1A, IL1B and IL1RN. After binding to interleukin-1 associates with the coreceptor IL1RAP to form the high affinity interleukin-1 receptor complex which mediates interleukin-1-dependent activation of NF-kappa-B, MAPK and other pathways. Signaling involves the recruitment of adapter molecules such as TOLLIP, MYD88, and IRAK1 or IRAK2 via the respective TIR domains of the receptor/coreceptor subunits. Binds ligands with comparable affinity and binding of antagonist IL1RN prevents association with IL1RAP to form a signaling complex. Involved in IL1B-mediated costimulation of IFNG production from T-helper 1 (Th1) cells. In Rattus norvegicus (Rat), this protein is Interleukin-1 receptor type 1 (Il1r1).